The chain runs to 428 residues: Type II methyltransferase M.BanI (428 aa).

Positions 3 to 417 (IKFVDLFAGI…EDLFQNNVNE (415 aa)) constitute an SAM-dependent MTase C5-type domain. Cys-76 is a catalytic residue.

Belongs to the class I-like SAM-binding methyltransferase superfamily. C5-methyltransferase family. In terms of assembly, monomer.

It carries out the reaction a 2'-deoxycytidine in DNA + S-adenosyl-L-methionine = a 5-methyl-2'-deoxycytidine in DNA + S-adenosyl-L-homocysteine + H(+). In terms of biological role, a methylase, recognizes the double-stranded sequence 5'-GGYRCC-3', methylates C-4 on both strands, and protects the DNA from cleavage by the BanI endonuclease. The polypeptide is Type II methyltransferase M.BanI (banIM) (Aneurinibacillus aneurinilyticus (Bacillus aneurinolyticus)).